Consider the following 282-residue polypeptide: MSKPEEVVNHVPEDEGSDIEAGGLFEDPPDFYPPSPPPTTEHYTMKNGDDITLHLVGHSPLEAHTLWNGAVIISQYFEEHPEEVKDRTVLEIGAAAGLPSLVAAVLGAKKVVVTDFPDPDIVDVMWKNIRGCPMLAVDREEDRNIVADGYVWGGKEAPLLAHLGEQKEGEAGFDVLILADLLFRHSEHSKLVDTIQFTLKKKPGSKAFVVFTSYRPWLQHKDLAFFDLARERGFIVDKFLEVKTEKPLFENDPGDEEIRKTVTGWTVRWPTDDEKAAAKADA.

Over residues 1-13 (MSKPEEVVNHVPE) the composition is skewed to basic and acidic residues. The interval 1–32 (MSKPEEVVNHVPEDEGSDIEAGGLFEDPPDFY) is disordered. Residues W67, 93 to 95 (GAA), D115, W152, and A179 contribute to the S-adenosyl-L-methionine site.

Belongs to the class I-like SAM-binding methyltransferase superfamily. EFM7 family.

It is found in the cytoplasm. Its function is as follows. S-adenosyl-L-methionine-dependent protein methyltransferase that trimethylates the N-terminal glycine 'Gly-2' of elongation factor 1-alpha, before also catalyzing the mono- and dimethylation of 'Lys-3'. The sequence is that of Protein N-terminal and lysine N-methyltransferase efm7 (nnt-1) from Neurospora crassa (strain ATCC 24698 / 74-OR23-1A / CBS 708.71 / DSM 1257 / FGSC 987).